We begin with the raw amino-acid sequence, 256 residues long: Small ribosomal subunit protein uS2 (256 aa).

It belongs to the universal ribosomal protein uS2 family.

The protein is Small ribosomal subunit protein uS2 of Brucella abortus (strain S19).